The following is an 863-amino-acid chain: Axin-1 (863 aa).

Residues 1–81 are disordered; it reads MNVQEQGFPL…PEGSASPTPP (81 aa). The Tankyrase-binding motif signature appears at 20-29; that stretch reads APRPPVPGEE. A compositionally biased stretch (polar residues) spans 34 to 61; sequence STDSRPVNHSFCSGKGTSIKSETSTATP. Ser-75 is modified (phosphoserine). Phosphoserine; by CK1 is present on Ser-77. One can recognise an RGS domain in the interval 88-211; it reads SLHSLLDDQD…LKSDIYLEYT (124 aa). An interaction with TP53 region spans residues 209-338; that stretch reads EYTRTGSESP…DADTLSLTDS (130 aa). 3 disordered regions span residues 215-240, 249-268, and 315-344; these read SESP…YLPT, CDQD…SRLT, and ATSA…DGIP. A Phosphoserine modification is found at Ser-217. The span at 249 to 258 shows a compositional bias: acidic residues; the sequence is CDQDADEDDG. The segment covering 325–339 has biased composition (low complexity); the sequence is SLSSDADTLSLTDSS. Positions 348-432 are interaction with GSK3B; the sequence is IRKQHRREMQ…EDGEMPSGPM (85 aa). The interaction with SIAH1 stretch occupies residues 353 to 411; the sequence is RREMQESIQVNGRVPLPHIPRTYRMPKEIRVEPQKFAEELIHRLEAVQRTREAEEKLEE. Residues 433 to 501 are interaction with beta-catenin; the sequence is ASHKLPSVPA…SPDSGHVAKT (69 aa). Ser-468 bears the Phosphoserine; by CK1 mark. The residue at position 480 (Thr-480) is a Phosphothreonine; by GSK3-beta. Position 485 is a phosphoserine; by GSK3-beta (Ser-485). Ser-492 and Ser-509 each carry phosphoserine. The tract at residues 505 to 758 is interaction with RNF111; that stretch reads GGTASGHGKH…PVLSVVPAVS (254 aa). Over residues 529–542 the composition is skewed to basic residues; it reads HHRHVHHHVHHNSA. Disordered stretches follow at residues 529–624 and 642–664; these read HHRH…DAEK and HRKA…SRPL. Basic and acidic residues predominate over residues 543–554; it reads RPKEQMEAEVAR. An interaction with PPP2CA region spans residues 572-790; that stretch reads PRSYSENAGT…CDSIVVAYYF (219 aa). The span at 575–584 shows a compositional bias: polar residues; the sequence is YSENAGTTLS. The segment at 678-753 is interaction with HIPK2; sequence AQLRNSVQPS…RPACAPVLSV (76 aa). A DIX domain is found at 781 to 863; it reads CDSIVVAYYF…KIIGKVEKVD (83 aa). Glycyl lysine isopeptide (Lys-Gly) (interchain with G-Cter in SUMO) cross-links involve residues Lys-858 and Lys-861.

In terms of assembly, homodimer. Component of the beta-catenin destruction complex, containing at least CTNNB1, an axin and GSK3B, that regulates CTNNB1 protein levels through phosphorylation and ubiquitination. Interacts with GSK3B; the interaction hyperphosphorylates CTNNB1 leading to its ubiquitination and destruction. Interacts with DAXX; the interaction stimulates the interaction of DAXX with TP53, stimulates 'Ser-46' phosphorylation of TP53 and induces cell death on UV irradiation. Also interacts with APC, RNF111, SMAD6 and SMAD7. Interacts (via the C-terminal) with PPP1CA; the interaction dephosphorylates AXIN1 and regulates interaction with GSK3B. Interacts with PPP2CA; the interaction dephosphorylates AXIN1. Interacts with MDFI; the interaction decreases AXIN1-mediated JUN N-terminal kinase (JNK) activation. Interacts with MDFIC; the interaction inhibits beta-cateninin-mediated signaling and AXIN1-mediated JUN N-terminal kinase (JNK) activation. Binds ANKRD6, PIAS1, PIAS2, PIAS4, SUMO1, MAP3K1 and MAP3K4. Component of the AXIN1-HIPK2-TP53 complex. Interacts directly in the complex with TP53 and HIPK2. Interacts with DIXDC1; the interaction prevents interaction with MAP3K1. Interacts with AIDA; the interaction blocks the AXIN1-mediated JNK activation through disrupting AXIN1 homodimerization and Wnt signaling. Interacts with LRP5 (via its phosphorylated PPPSP motifs); the interaction is stimulated by WNT1 and GSK3B and activates beta-catenin signaling. Interacts with CTNNB1 (via the armadillo repeats 2-7). Interacts with MACF1. Found in a complex composed of MACF1, APC, AXIN1, CTNNB1 and GSK3B. Interacts with TNKS. Interacts with DAB2; the interaction is mutually exclusive with the AXIN1:PPP1CA interaction. Interacts with ZBED3 (via PPPSP motif); the interaction is direct, enhanced by protein kinase GSK3B and casein kinase CSNK1E activities and decreases GSK3B-induced beta-catenin serine and threonine phosphorylations. Interacts with WDR26. Interacts with GID8. Interacts with SIAH1 and SIAH2; both probably catalyze AXIN1 ubiquitination and subsequent proteasome-mediated ubiquitin-dependent degradation. Interaction with GSK3B and AXIN1 is competitive. Post-translationally, phosphorylation and dephosphorylation of AXIN1 regulates assembly and function of the beta-catenin complex. Phosphorylated by CK1 and GSK3B. Dephosphorylated by PPP1CA and PPP2CA. Phosphorylation by CK1 enhances binding of GSK3B to AXIN1. Also phosphorylated by CDK2 which regulates interaction with CTNBB1. ADP-ribosylated by tankyrase TNKS and TNKS2. Poly-ADP-ribosylated protein is recognized by RNF146, followed by ubiquitination and subsequent activation of the Wnt signaling pathway. In terms of processing, ubiquitinated by RNF146 when poly-ADP-ribosylated, leading to its degradation and subsequent activation of the Wnt signaling pathway. Deubiquitinated by USP34, deubiquitinated downstream of beta-catenin stabilization step: deubiquitination is important for nuclear accumulation during Wnt signaling to positively regulate beta-catenin (CTNBB1)-mediated transcription. Sumoylation at Lys-858 and Lys-861 prevents ubiquitination and degradation. Sumoylation is required for AXIN1-mediated JNK activation. Ubiquitination by SIAH1 and SIAH2 induces its proteasomal degradation as part of the activation of the Wnt signaling pathway. Expressed in embryonic stem cells.

It is found in the cytoplasm. The protein resides in the nucleus. Its subcellular location is the cell membrane. It localises to the membrane. Its function is as follows. Component of the beta-catenin destruction complex required for regulating CTNNB1 levels through phosphorylation and ubiquitination, and modulating Wnt-signaling. Controls dorsoventral patterning via two opposing effects; down-regulates CTNNB1 to inhibit the Wnt signaling pathway and ventralize embryos, but also dorsalizes embryos by activating a Wnt-independent JNK signaling pathway. In Wnt signaling, probably facilitates the phosphorylation of CTNNB1 and APC by GSK3B. Likely to function as a tumor suppressor. Facilitates the phosphorylation of TP53 by HIPK2 upon ultraviolet irradiation. Enhances TGF-beta signaling by recruiting the RNF111 E3 ubiquitin ligase and promoting the degradation of inhibitory SMAD7. Also a component of the AXIN1-HIPK2-TP53 complex which controls cell growth, apoptosis and development. This chain is Axin-1 (Axin1), found in Mus musculus (Mouse).